Consider the following 320-residue polypeptide: Lipoyl synthase (320 aa).

Positions 67, 72, 78, 93, 97, 100, and 307 each coordinate [4Fe-4S] cluster. Residues 79–296 (FNHGTATFMI…RDKAEKMGFE (218 aa)) form the Radical SAM core domain.

The protein belongs to the radical SAM superfamily. Lipoyl synthase family. It depends on [4Fe-4S] cluster as a cofactor.

The protein localises to the cytoplasm. The enzyme catalyses [[Fe-S] cluster scaffold protein carrying a second [4Fe-4S](2+) cluster] + N(6)-octanoyl-L-lysyl-[protein] + 2 oxidized [2Fe-2S]-[ferredoxin] + 2 S-adenosyl-L-methionine + 4 H(+) = [[Fe-S] cluster scaffold protein] + N(6)-[(R)-dihydrolipoyl]-L-lysyl-[protein] + 4 Fe(3+) + 2 hydrogen sulfide + 2 5'-deoxyadenosine + 2 L-methionine + 2 reduced [2Fe-2S]-[ferredoxin]. Its pathway is protein modification; protein lipoylation via endogenous pathway; protein N(6)-(lipoyl)lysine from octanoyl-[acyl-carrier-protein]: step 2/2. Functionally, catalyzes the radical-mediated insertion of two sulfur atoms into the C-6 and C-8 positions of the octanoyl moiety bound to the lipoyl domains of lipoate-dependent enzymes, thereby converting the octanoylated domains into lipoylated derivatives. This is Lipoyl synthase from Histophilus somni (strain 129Pt) (Haemophilus somnus).